Consider the following 751-residue polypeptide: Serine/threonine-protein kinase-like protein CCR4 (751 aa).

Residues 1–31 (MALTISISCFSSYFVSLLLLVLSSFSFVCFS) form the signal peptide. The Extracellular segment spans residues 32–366 (LSTVSISHIS…NKTWSRRNIA (335 aa)). Residues asparagine 42, asparagine 51, asparagine 98, asparagine 243, asparagine 254, asparagine 283, and asparagine 357 are each glycosylated (N-linked (GlcNAc...) asparagine). A helical transmembrane segment spans residues 367–387 (FLVVGCVGTFSLLLVISFLIF). Residues 388-751 (KSHCRCRVHD…TETVSRSNTY (364 aa)) lie on the Cytoplasmic side of the membrane. In terms of domain architecture, Protein kinase spans 443 to 733 (FSVRFHLGIG…EVVSKLESAL (291 aa)). ATP is bound by residues 449 to 457 (LGIGSFGSV) and lysine 471. Residue aspartate 579 is the Proton acceptor of the active site.

It belongs to the protein kinase superfamily. Ser/Thr protein kinase family. In terms of assembly, homodimer. In terms of tissue distribution, expressed in roots, leaves, especially in trichomes, shoot apical meristems (SAM), and, to a lower extent, in floral buds.

The protein localises to the membrane. It carries out the reaction L-seryl-[protein] + ATP = O-phospho-L-seryl-[protein] + ADP + H(+). The catalysed reaction is L-threonyl-[protein] + ATP = O-phospho-L-threonyl-[protein] + ADP + H(+). The protein is Serine/threonine-protein kinase-like protein CCR4 (CCR4) of Arabidopsis thaliana (Mouse-ear cress).